A 255-amino-acid polypeptide reads, in one-letter code: 4-hydroxy-tetrahydrodipicolinate reductase (255 aa).

NAD(+)-binding positions include 9 to 14 (GFKGKM), 89 to 91 (GTT), and 115 to 118 (APNF). The active-site Proton donor/acceptor is the His145. His146 contributes to the (S)-2,3,4,5-tetrahydrodipicolinate binding site. The Proton donor role is filled by Lys149. Residue 155 to 156 (GT) participates in (S)-2,3,4,5-tetrahydrodipicolinate binding.

Belongs to the DapB family.

It localises to the cytoplasm. The catalysed reaction is (S)-2,3,4,5-tetrahydrodipicolinate + NAD(+) + H2O = (2S,4S)-4-hydroxy-2,3,4,5-tetrahydrodipicolinate + NADH + H(+). It catalyses the reaction (S)-2,3,4,5-tetrahydrodipicolinate + NADP(+) + H2O = (2S,4S)-4-hydroxy-2,3,4,5-tetrahydrodipicolinate + NADPH + H(+). Its pathway is amino-acid biosynthesis; L-lysine biosynthesis via DAP pathway; (S)-tetrahydrodipicolinate from L-aspartate: step 4/4. Its function is as follows. Catalyzes the conversion of 4-hydroxy-tetrahydrodipicolinate (HTPA) to tetrahydrodipicolinate. This is 4-hydroxy-tetrahydrodipicolinate reductase from Streptococcus suis (strain 98HAH33).